Here is a 389-residue protein sequence, read N- to C-terminus: Succinate--CoA ligase [ADP-forming] subunit beta (389 aa).

Residues lysine 46, 53-55 (GRG), glutamate 99, cysteine 102, and glutamate 107 contribute to the ATP site. Positions 199 and 213 each coordinate Mg(2+). Residues asparagine 264 and 321 to 323 (GIV) contribute to the substrate site.

The protein belongs to the succinate/malate CoA ligase beta subunit family. Heterotetramer of two alpha and two beta subunits. Mg(2+) serves as cofactor.

The enzyme catalyses succinate + ATP + CoA = succinyl-CoA + ADP + phosphate. It carries out the reaction GTP + succinate + CoA = succinyl-CoA + GDP + phosphate. It functions in the pathway carbohydrate metabolism; tricarboxylic acid cycle; succinate from succinyl-CoA (ligase route): step 1/1. Its function is as follows. Succinyl-CoA synthetase functions in the citric acid cycle (TCA), coupling the hydrolysis of succinyl-CoA to the synthesis of either ATP or GTP and thus represents the only step of substrate-level phosphorylation in the TCA. The beta subunit provides nucleotide specificity of the enzyme and binds the substrate succinate, while the binding sites for coenzyme A and phosphate are found in the alpha subunit. The protein is Succinate--CoA ligase [ADP-forming] subunit beta of Haemophilus influenzae (strain PittEE).